We begin with the raw amino-acid sequence, 151 residues long: Pyruvoyl-dependent arginine decarboxylase (151 aa).

Residue Ser42 is modified to Pyruvic acid (Ser).

It belongs to the PdaD family. It depends on pyruvate as a cofactor.

It carries out the reaction L-arginine + H(+) = agmatine + CO2. In Methanothermobacter thermautotrophicus (strain ATCC 29096 / DSM 1053 / JCM 10044 / NBRC 100330 / Delta H) (Methanobacterium thermoautotrophicum), this protein is Pyruvoyl-dependent arginine decarboxylase.